The following is a 257-amino-acid chain: Ubiquinone biosynthesis O-methyltransferase (257 aa).

Positions 43, 77, 98, and 144 each coordinate S-adenosyl-L-methionine.

The protein belongs to the methyltransferase superfamily. UbiG/COQ3 family.

The catalysed reaction is a 3-demethylubiquinol + S-adenosyl-L-methionine = a ubiquinol + S-adenosyl-L-homocysteine + H(+). It carries out the reaction a 3-(all-trans-polyprenyl)benzene-1,2-diol + S-adenosyl-L-methionine = a 2-methoxy-6-(all-trans-polyprenyl)phenol + S-adenosyl-L-homocysteine + H(+). The protein operates within cofactor biosynthesis; ubiquinone biosynthesis. In terms of biological role, O-methyltransferase that catalyzes the 2 O-methylation steps in the ubiquinone biosynthetic pathway. This is Ubiquinone biosynthesis O-methyltransferase from Psychrobacter cryohalolentis (strain ATCC BAA-1226 / DSM 17306 / VKM B-2378 / K5).